The sequence spans 291 residues: ATP synthase gamma chain 2 (291 aa).

Positions 187 to 208 are disordered; it reads LLPHPDKDESQDSKPNDATSRW. The span at 190–201 shows a compositional bias: basic and acidic residues; sequence HPDKDESQDSKP.

The protein belongs to the ATPase gamma chain family. F-type ATPases have 2 components, CF(1) - the catalytic core - and CF(0) - the membrane proton channel. CF(1) has five subunits: alpha(3), beta(3), gamma(1), delta(1), epsilon(1). CF(0) has three main subunits: a, b and c.

Its subcellular location is the cell inner membrane. Functionally, produces ATP from ADP in the presence of a proton gradient across the membrane. The gamma chain is believed to be important in regulating ATPase activity and the flow of protons through the CF(0) complex. The polypeptide is ATP synthase gamma chain 2 (Photobacterium profundum (strain SS9)).